Here is a 333-residue protein sequence, read N- to C-terminus: Adenosine deaminase (333 aa).

2 residues coordinate Zn(2+): histidine 12 and histidine 14. Residues histidine 14, aspartate 16, and glycine 170 each contribute to the substrate site. Histidine 197 lines the Zn(2+) pocket. The active-site Proton donor is glutamate 200. Aspartate 278 contributes to the Zn(2+) binding site. Aspartate 279 lines the substrate pocket.

Belongs to the metallo-dependent hydrolases superfamily. Adenosine and AMP deaminases family. Adenosine deaminase subfamily. It depends on Zn(2+) as a cofactor.

It carries out the reaction adenosine + H2O + H(+) = inosine + NH4(+). It catalyses the reaction 2'-deoxyadenosine + H2O + H(+) = 2'-deoxyinosine + NH4(+). Catalyzes the hydrolytic deamination of adenosine and 2-deoxyadenosine. This is Adenosine deaminase from Shigella dysenteriae serotype 1 (strain Sd197).